The primary structure comprises 401 residues: Lsg locus putative protein 1 (401 aa).

A run of 11 helical transmembrane segments spans residues 8–28 (VIYL…LPYL), 36–56 (GYGS…VVSL), 87–107 (IIGS…LFYA), 132–152 (SYAF…VALL), 162–182 (KRIL…YFLY), 199–219 (ALFY…SFFL), 237–257 (LGLY…IQAL), 282–302 (WALF…IIPE), 320–340 (FILF…VNYL), 352–372 (CSVL…FTEI), and 374–394 (YIPY…YFMT).

It belongs to the polysaccharide synthase family. HI_0867/HI_1700 subfamily.

The protein localises to the cell membrane. The sequence is that of Lsg locus putative protein 1 from Haemophilus influenzae (strain ATCC 51907 / DSM 11121 / KW20 / Rd).